Reading from the N-terminus, the 309-residue chain is Pantothenate kinase (309 aa).

Position 92 to 99 (92 to 99 (GSVAVGKS)) interacts with ATP.

This sequence belongs to the prokaryotic pantothenate kinase family.

The protein localises to the cytoplasm. The enzyme catalyses (R)-pantothenate + ATP = (R)-4'-phosphopantothenate + ADP + H(+). The protein operates within cofactor biosynthesis; coenzyme A biosynthesis; CoA from (R)-pantothenate: step 1/5. The chain is Pantothenate kinase from Latilactobacillus sakei subsp. sakei (strain 23K) (Lactobacillus sakei subsp. sakei).